The primary structure comprises 153 residues: Arginine repressor (153 aa).

It belongs to the ArgR family.

It is found in the cytoplasm. It participates in amino-acid biosynthesis; L-arginine biosynthesis [regulation]. Its function is as follows. Regulates arginine biosynthesis genes. This is Arginine repressor from Syntrophomonas wolfei subsp. wolfei (strain DSM 2245B / Goettingen).